Reading from the N-terminus, the 356-residue chain is Protein pelota homolog (356 aa).

It belongs to the eukaryotic release factor 1 family. Pelota subfamily. As to quaternary structure, monomer. A divalent metal cation is required as a cofactor.

The protein resides in the cytoplasm. Functionally, may function in recognizing stalled ribosomes, interact with stem-loop structures in stalled mRNA molecules, and effect endonucleolytic cleavage of the mRNA. May play a role in the release non-functional ribosomes and degradation of damaged mRNAs. Has endoribonuclease activity. The protein is Protein pelota homolog of Desulfurococcus amylolyticus (strain DSM 18924 / JCM 16383 / VKM B-2413 / 1221n) (Desulfurococcus kamchatkensis).